Consider the following 382-residue polypeptide: D-galactonate dehydratase (382 aa).

Aspartate 183 lines the Mg(2+) pocket. Histidine 185 serves as the catalytic Proton donor. Residues glutamate 209 and glutamate 235 each contribute to the Mg(2+) site. The Proton acceptor role is filled by histidine 285.

It belongs to the mandelate racemase/muconate lactonizing enzyme family. GalD subfamily. It depends on Mg(2+) as a cofactor.

It carries out the reaction D-galactonate = 2-dehydro-3-deoxy-D-galactonate + H2O. The protein operates within carbohydrate acid metabolism; D-galactonate degradation; D-glyceraldehyde 3-phosphate and pyruvate from D-galactonate: step 1/3. Functionally, catalyzes the dehydration of D-galactonate to 2-keto-3-deoxy-D-galactonate. The protein is D-galactonate dehydratase of Klebsiella pneumoniae subsp. pneumoniae (strain ATCC 700721 / MGH 78578).